We begin with the raw amino-acid sequence, 170 residues long: uncharacterized protein (170 aa).

A signal peptide spans 1–28 (MTGGVMSQKFVVGAGLLVCSVCSLSAMA).

The protein belongs to the fimbrial protein family.

In terms of biological role, part of the yfcOPQRSUV fimbrial operon. Could contribute to adhesion to various surfaces in specific environmental niches. Increases adhesion to eukaryotic T24 bladder epithelial cells in the absence of fim genes. This is an uncharacterized protein from Escherichia coli (strain K12).